We begin with the raw amino-acid sequence, 23 residues long: Cardioactive peptide CAP23 (23 aa).

An intrachain disulfide couples C7 to C19.

The protein belongs to the GBP/PSP1/paralytic peptide family.

Functionally, has excitatory effects on a semi-isolated heart from larval Manduca sexta, causing an inotropic effect at low concentrations of peptide and chronotropic and inotropic effects at high doses. This Spodoptera eridania (Southern armyworm) protein is Cardioactive peptide CAP23.